The primary structure comprises 142 residues: Large ribosomal subunit protein uL13 (142 aa).

This sequence belongs to the universal ribosomal protein uL13 family. As to quaternary structure, part of the 50S ribosomal subunit.

This protein is one of the early assembly proteins of the 50S ribosomal subunit, although it is not seen to bind rRNA by itself. It is important during the early stages of 50S assembly. In Proteus mirabilis (strain HI4320), this protein is Large ribosomal subunit protein uL13.